The chain runs to 130 residues: Small ribosomal subunit protein uS9 (130 aa).

Positions 105–130 are disordered; sequence TRDPRMKERKKYGLKGARRAPQFSKR. Basic residues predominate over residues 111–130; sequence KERKKYGLKGARRAPQFSKR.

This sequence belongs to the universal ribosomal protein uS9 family.

This chain is Small ribosomal subunit protein uS9, found in Bacillus pumilus (strain SAFR-032).